The primary structure comprises 84 residues: Small ribosomal subunit protein uS17 (84 aa).

It belongs to the universal ribosomal protein uS17 family. Part of the 30S ribosomal subunit.

Functionally, one of the primary rRNA binding proteins, it binds specifically to the 5'-end of 16S ribosomal RNA. This is Small ribosomal subunit protein uS17 from Alkaliphilus metalliredigens (strain QYMF).